Reading from the N-terminus, the 422-residue chain is MAFLALGINHKTASVDVRERVAFTPDQMVEALRQLCRVTPTREAAILSTCNRSELYLQQDEVEAEAVLAWLASYHRLSLDELKACAYVHVDDQAVRHMMRVASGLDSLVLGEPQILGQMKSAYAVAREAGSVGPLLGRLFQATFSTAKTVRTDTAIGENPVSVAFAAVSLARQIFSNLQRSQALLIGAGETITLVARHLHEQGVKRIVVANRTLERASALAAELGAHAILLADIPDELHNSDIVISSTASQLPILGKGAVEQALKRRKHKPMFMVDIAVPRDIESQVGELDDVYLYTVDDLHEVVAENLKSRQGAAQAAEELVAAGTEDFMQRLRELAAVDVLKAYRQHAERIRDDELSKAQRLLANGASAEDALAQLARGLTNKLLHAPSVQLKKLSAEGRVEALSMAQELFALHEGTEKP.

Residues 49–52, Ser-107, 112–114, and Gln-118 contribute to the substrate site; these read TCNR and EPQ. The Nucleophile role is filled by Cys-50. 187–192 is a binding site for NADP(+); that stretch reads GAGETI.

Belongs to the glutamyl-tRNA reductase family. In terms of assembly, homodimer.

The catalysed reaction is (S)-4-amino-5-oxopentanoate + tRNA(Glu) + NADP(+) = L-glutamyl-tRNA(Glu) + NADPH + H(+). It functions in the pathway porphyrin-containing compound metabolism; protoporphyrin-IX biosynthesis; 5-aminolevulinate from L-glutamyl-tRNA(Glu): step 1/2. Functionally, catalyzes the NADPH-dependent reduction of glutamyl-tRNA(Glu) to glutamate 1-semialdehyde (GSA). In Stutzerimonas stutzeri (strain A1501) (Pseudomonas stutzeri), this protein is Glutamyl-tRNA reductase.